Consider the following 240-residue polypeptide: RING finger protein 151 (240 aa).

The segment at 20-58 (CSVCHGVLKRPVRLPCSHIFCKKCILRWLARQKTCPCCR) adopts an RING-type zinc-finger fold. The TRAF-type zinc finger occupies 101 to 156 (GHQDSCPFELMVCPNEGCMLRVPRGALDEHRQNCQHGAYHRCSLGCGATLGPVERA).

This chain is RING finger protein 151 (RNF151), found in Bos taurus (Bovine).